Consider the following 942-residue polypeptide: UvrABC system protein A (942 aa).

Residue 32-39 (GLSGSGKS) coordinates ATP. The C4-type zinc-finger motif lies at 251-278 (CPVCGFTVPELEPRLFSFNAPFGSCPTC). ABC transporter domains lie at 308-589 (WNPI…KKSI) and 609-937 (GNGR…HYLK). Residue 641–648 (GVSGSGKS) participates in ATP binding. Residues 740–766 (CEACSGDGIIKIEMHFLPDVYVPCEVC) form a C4-type zinc finger.

The protein belongs to the ABC transporter superfamily. UvrA family. Forms a heterotetramer with UvrB during the search for lesions.

The protein localises to the cytoplasm. In terms of biological role, the UvrABC repair system catalyzes the recognition and processing of DNA lesions. UvrA is an ATPase and a DNA-binding protein. A damage recognition complex composed of 2 UvrA and 2 UvrB subunits scans DNA for abnormalities. When the presence of a lesion has been verified by UvrB, the UvrA molecules dissociate. This chain is UvrABC system protein A, found in Streptococcus pyogenes serotype M1.